A 281-amino-acid polypeptide reads, in one-letter code: 4-diphosphocytidyl-2-C-methyl-D-erythritol kinase (281 aa).

Residue Lys-15 is part of the active site. Residue 98-108 participates in ATP binding; it reads PTGAGLGGGSS. Asp-140 is an active-site residue.

The protein belongs to the GHMP kinase family. IspE subfamily.

It carries out the reaction 4-CDP-2-C-methyl-D-erythritol + ATP = 4-CDP-2-C-methyl-D-erythritol 2-phosphate + ADP + H(+). Its pathway is isoprenoid biosynthesis; isopentenyl diphosphate biosynthesis via DXP pathway; isopentenyl diphosphate from 1-deoxy-D-xylulose 5-phosphate: step 3/6. Its function is as follows. Catalyzes the phosphorylation of the position 2 hydroxy group of 4-diphosphocytidyl-2C-methyl-D-erythritol. The chain is 4-diphosphocytidyl-2-C-methyl-D-erythritol kinase from Neisseria meningitidis serogroup B (strain ATCC BAA-335 / MC58).